The primary structure comprises 216 residues: Nudix hydrolase 26, chloroplastic (216 aa).

A chloroplast-targeting transit peptide spans M1–C53. Positions G62–S209 constitute a Nudix hydrolase domain. The Nudix box signature appears at G95 to G116. Mn(2+)-binding residues include E110 and E114.

It belongs to the Nudix hydrolase family. The cofactor is Mg(2+). Mn(2+) serves as cofactor. As to expression, expressed in roots, leaves, stems and inflorescences.

It localises to the plastid. The protein localises to the chloroplast. Its function is as follows. Mediates the hydrolysis of some nucleoside diphosphate derivatives. Can use diadenosine 5',5'''-P(1)P(5) pentaphosphate (Ap(5)A), diadenosine 5',5'''-P(1)P(4) tetraphosphate (Ap(4)A) and diadenosine 5',5'''-P(1)P(3) triphosphate (Ap(3)A) as substrates. In Arabidopsis thaliana (Mouse-ear cress), this protein is Nudix hydrolase 26, chloroplastic (NUDT26).